Consider the following 305-residue polypeptide: MENLTENQATNNNSPFRIKSSLAQMLKGGVIMDVVTPEQARIAEEAGACAVMALEKIPADIRHFGGVARMSDPGMIKEIMNAVTIPVMAKVRIGHFVEAQILQEIGVDYIDESEVLTIADNENHIDKSEFKVPFVCGCRNLGEALRRISEGAAMIRTKGEAGTGDVVEAVRHARAVNKEIKKIQNMDPHELYTYAKEIQAPLELVKEVKRLGRLPVVNFAAGGVATPADAAMMMQLGMDGVFVGSGIFKSGDPAKRAKAIVQAVTHFNNPQIVAKVSENLGEAMVGINVDTLKDKENQNWSTKEK.

Position 33 (Asp33) interacts with D-ribose 5-phosphate. Lys90 acts as the Schiff-base intermediate with D-ribose 5-phosphate in catalysis. Residue Gly162 coordinates D-ribose 5-phosphate. D-glyceraldehyde 3-phosphate is bound at residue Arg174. D-ribose 5-phosphate-binding positions include Gly223 and 244 to 245 (GS).

It belongs to the PdxS/SNZ family. Homohexamer.

The catalysed reaction is aldehydo-D-ribose 5-phosphate + D-glyceraldehyde 3-phosphate + L-glutamine = pyridoxal 5'-phosphate + L-glutamate + phosphate + 3 H2O + H(+). Its pathway is cofactor biosynthesis; pyridoxal 5'-phosphate biosynthesis. Functionally, catalyzes the formation of pyridoxal 5'-phosphate from ribose 5-phosphate (RBP), glyceraldehyde 3-phosphate (G3P) and ammonia. The ammonia is provided by pdx2. Can also use ribulose 5-phosphate and dihydroxyacetone phosphate as substrates, resulting from enzyme-catalyzed isomerization of RBP and G3P, respectively. The sequence is that of Probable pyridoxal 5'-phosphate synthase subunit pdx1 (pdx1) from Dictyostelium discoideum (Social amoeba).